A 387-amino-acid polypeptide reads, in one-letter code: Succinate--CoA ligase [ADP-forming] subunit beta (387 aa).

An ATP-grasp domain is found at 9–244 (KQLFAEYGIP…KTQEDETEVL (236 aa)). ATP is bound by residues K46, 53–55 (GRG), G102, and E107. 2 residues coordinate Mg(2+): N199 and D213. Substrate is bound by residues N264 and 321-323 (GIV).

It belongs to the succinate/malate CoA ligase beta subunit family. In terms of assembly, heterotetramer of two alpha and two beta subunits. Mg(2+) is required as a cofactor.

The catalysed reaction is succinate + ATP + CoA = succinyl-CoA + ADP + phosphate. The enzyme catalyses GTP + succinate + CoA = succinyl-CoA + GDP + phosphate. It participates in carbohydrate metabolism; tricarboxylic acid cycle; succinate from succinyl-CoA (ligase route): step 1/1. Its function is as follows. Succinyl-CoA synthetase functions in the citric acid cycle (TCA), coupling the hydrolysis of succinyl-CoA to the synthesis of either ATP or GTP and thus represents the only step of substrate-level phosphorylation in the TCA. The beta subunit provides nucleotide specificity of the enzyme and binds the substrate succinate, while the binding sites for coenzyme A and phosphate are found in the alpha subunit. The polypeptide is Succinate--CoA ligase [ADP-forming] subunit beta (Xylella fastidiosa (strain M23)).